The sequence spans 360 residues: Peptide chain release factor 1 (360 aa).

The residue at position 237 (Q237) is an N5-methylglutamine.

It belongs to the prokaryotic/mitochondrial release factor family. In terms of processing, methylated by PrmC. Methylation increases the termination efficiency of RF1.

It is found in the cytoplasm. Peptide chain release factor 1 directs the termination of translation in response to the peptide chain termination codons UAG and UAA. This is Peptide chain release factor 1 from Cellvibrio japonicus (strain Ueda107) (Pseudomonas fluorescens subsp. cellulosa).